The sequence spans 251 residues: ATP synthase subunit a (251 aa).

6 helical membrane passes run 30–50 (NSNE…VVAL), 86–106 (FFPF…LGLF), 116–136 (IAIT…VGFW), 145–165 (FFSP…IEIV), 195–215 (FMLM…IIPL), and 219–239 (IALT…FAIL).

The protein belongs to the ATPase A chain family. F-type ATPases have 2 components, CF(1) - the catalytic core - and CF(0) - the membrane proton channel. CF(1) has five subunits: alpha(3), beta(3), gamma(1), delta(1), epsilon(1). CF(0) has three main subunits: a(1), b(2) and c(9-12). The alpha and beta chains form an alternating ring which encloses part of the gamma chain. CF(1) is attached to CF(0) by a central stalk formed by the gamma and epsilon chains, while a peripheral stalk is formed by the delta and b chains.

It is found in the cell inner membrane. Its function is as follows. Key component of the proton channel; it plays a direct role in the translocation of protons across the membrane. This chain is ATP synthase subunit a, found in Acidiphilium cryptum (strain JF-5).